A 370-amino-acid polypeptide reads, in one-letter code: UDP-N-acetylglucosamine--N-acetylmuramyl-(pentapeptide) pyrophosphoryl-undecaprenol N-acetylglucosamine transferase (370 aa).

UDP-N-acetyl-alpha-D-glucosamine-binding positions include 15–17, Asn-129, Arg-171, Ser-200, Ile-256, and Gln-301; that span reads TGG.

It belongs to the glycosyltransferase 28 family. MurG subfamily.

The protein localises to the cell membrane. It carries out the reaction di-trans,octa-cis-undecaprenyl diphospho-N-acetyl-alpha-D-muramoyl-L-alanyl-D-glutamyl-meso-2,6-diaminopimeloyl-D-alanyl-D-alanine + UDP-N-acetyl-alpha-D-glucosamine = di-trans,octa-cis-undecaprenyl diphospho-[N-acetyl-alpha-D-glucosaminyl-(1-&gt;4)]-N-acetyl-alpha-D-muramoyl-L-alanyl-D-glutamyl-meso-2,6-diaminopimeloyl-D-alanyl-D-alanine + UDP + H(+). It participates in cell wall biogenesis; peptidoglycan biosynthesis. Cell wall formation. Catalyzes the transfer of a GlcNAc subunit on undecaprenyl-pyrophosphoryl-MurNAc-pentapeptide (lipid intermediate I) to form undecaprenyl-pyrophosphoryl-MurNAc-(pentapeptide)GlcNAc (lipid intermediate II). This Caldicellulosiruptor saccharolyticus (strain ATCC 43494 / DSM 8903 / Tp8T 6331) protein is UDP-N-acetylglucosamine--N-acetylmuramyl-(pentapeptide) pyrophosphoryl-undecaprenol N-acetylglucosamine transferase.